The chain runs to 817 residues: DNA replication licensing factor Mcm6 (817 aa).

A C4-type zinc finger spans residues 152–179 (CLDCQTEIRNVEQQFKFTNPTICRNPVC). The MCM domain maps to 338 to 544 (LYQNLISSLF…VVDYAIARKI (207 aa)). 6 residues coordinate ATP: serine 391, threonine 392, alanine 393, lysine 394, serine 395, and asparagine 496. The Arginine finger signature appears at 520-523 (SRFD). The ADP site is built by arginine 611 and glutamate 614.

The protein belongs to the MCM family. As to quaternary structure, component of the Mcm2-7 complex. The complex forms a toroidal hexameric ring with the proposed subunit order Mcm2-Mcm6-Mcm4-Mcm7-Mcm3-Mcm5. The heterodimers of Mcm4/Mcm6 and Mcm3/Mcm5 interact with Mcm2 and Mcm7. In stage 12 embryos, strongly expressed in the CNS and weakly in the gut.

The protein resides in the nucleus. It catalyses the reaction ATP + H2O = ADP + phosphate + H(+). In terms of biological role, acts as a component of the Mcm2-7 complex (Mcm complex) which is the putative replicative helicase essential for 'once per cell cycle' DNA replication initiation and elongation in eukaryotic cells. Core component of CDC45-MCM-GINS (CMG) helicase, the molecular machine that unwinds template DNA during replication, and around which the replisome is built. The active ATPase sites in the Mcm2-7 ring are formed through the interaction surfaces of two neighboring subunits such that a critical structure of a conserved arginine finger motif is provided in trans relative to the ATP-binding site of the Walker A box of the adjacent subunit. The six ATPase active sites, however, are likely to contribute differentially to the complex helicase activity Required for DNA replication and cell proliferation. Required for mitotic cycles, endocycles, and the special S phase associated with the amplification of chorion genes; has a role in origin unwinding or fork elongation at chorion loci. This chain is DNA replication licensing factor Mcm6, found in Drosophila melanogaster (Fruit fly).